A 294-amino-acid polypeptide reads, in one-letter code: NAD kinase (294 aa).

Catalysis depends on D74, which acts as the Proton acceptor. NAD(+)-binding positions include 74-75, 148-149, H159, R176, D178, and 189-194; these read DG, NE, and TAYSLS.

The protein belongs to the NAD kinase family. A divalent metal cation is required as a cofactor.

It is found in the cytoplasm. It catalyses the reaction NAD(+) + ATP = ADP + NADP(+) + H(+). Its function is as follows. Involved in the regulation of the intracellular balance of NAD and NADP, and is a key enzyme in the biosynthesis of NADP. Catalyzes specifically the phosphorylation on 2'-hydroxyl of the adenosine moiety of NAD to yield NADP. This chain is NAD kinase, found in Pseudoalteromonas translucida (strain TAC 125).